Here is a 636-residue protein sequence, read N- to C-terminus: 1-deoxy-D-xylulose-5-phosphate synthase (636 aa).

Thiamine diphosphate contacts are provided by residues His-72 and 113 to 115; that span reads GHA. Asp-144 serves as a coordination point for Mg(2+). Thiamine diphosphate is bound by residues 145–146, Asn-174, Tyr-287, and Glu-370; that span reads GS. Asn-174 is a binding site for Mg(2+).

Belongs to the transketolase family. DXPS subfamily. As to quaternary structure, homodimer. It depends on Mg(2+) as a cofactor. The cofactor is thiamine diphosphate.

It catalyses the reaction D-glyceraldehyde 3-phosphate + pyruvate + H(+) = 1-deoxy-D-xylulose 5-phosphate + CO2. It participates in metabolic intermediate biosynthesis; 1-deoxy-D-xylulose 5-phosphate biosynthesis; 1-deoxy-D-xylulose 5-phosphate from D-glyceraldehyde 3-phosphate and pyruvate: step 1/1. Its function is as follows. Catalyzes the acyloin condensation reaction between C atoms 2 and 3 of pyruvate and glyceraldehyde 3-phosphate to yield 1-deoxy-D-xylulose-5-phosphate (DXP). This Synechococcus elongatus (strain ATCC 33912 / PCC 7942 / FACHB-805) (Anacystis nidulans R2) protein is 1-deoxy-D-xylulose-5-phosphate synthase.